The following is a 91-amino-acid chain: RING finger protein Z (91 aa).

Gly2 is lipidated: N-myristoyl glycine; by host. The segment at 35–71 adopts an RING-type; atypical zinc-finger fold; the sequence is CKCCWFQDKNLVECSDHYLCLKCISSMLKRGKNCEIC. The PTAP/PSAP motif motif lies at 85–88; that stretch reads PTAP.

It belongs to the arenaviridae Z protein family. In terms of assembly, interacts with protein NP; this interaction probably directs the encapsidated genome to budding sites. Interacts (via RING domain) with polymerase L; this interaction inhibits viral transcription and replication, Z partially blocks the product exit tunnel for the releasing nascent RNA product. Interacts with the glycoprotein complex; this interaction plays a role in virion budding. Interacts with host eIF4E; this interaction results in eIF4E reduced affinity for its substrate, the 5'-m7 G cap structure. Interacts (via late-budding domain) with host TSG101; this interaction is essential for budding and release of viral particles. Interacts with host RPLP0; this interaction may serve to load ribosome-like particles inside the virion. Interacts with host PML; this interaction induces PML bodies redistribution in the cytoplasm upon viral infection. Post-translationally, myristoylation is required for the role of RING finger protein Z in assembly and budding.

It is found in the virion. It localises to the host cytoplasm. The protein resides in the host perinuclear region. Its subcellular location is the host cell membrane. Plays a crucial role in virion assembly and budding. Expressed late in the virus life cycle, it acts as an inhibitor of viral transcription and RNA synthesis by interacting with the viral polymerase L. Presumably recruits the NP encapsidated genome to cellular membranes at budding sites via direct interaction with NP. Plays critical roles in the final steps of viral release by interacting with host TSG101, a member of the vacuolar protein-sorting pathway and using other cellular host proteins involved in vesicle formation pathway. The budding of the virus progeny occurs after association of protein Z with the viral glycoprotein complex SSP-GP1-GP2 at the cell periphery, step that requires myristoylation of protein Z. Also selectively represses protein production by associating with host eIF4E. In cell-based minigenome assay, has an inhibitory effect on the ribonucleoprotein machinery (vRNP), which is responsible for the replication and transcription of the viral genome. This is RING finger protein Z from Latino mammarenavirus (isolate Rat/Bolivia/MARU 1924/1965) (LATV).